The following is a 354-amino-acid chain: Uroporphyrinogen decarboxylase (354 aa).

Residues 25–29 (RQAGR), F44, D75, Y152, T207, and H330 each bind substrate.

This sequence belongs to the uroporphyrinogen decarboxylase family. In terms of assembly, homodimer.

Its subcellular location is the cytoplasm. It carries out the reaction uroporphyrinogen III + 4 H(+) = coproporphyrinogen III + 4 CO2. Its pathway is porphyrin-containing compound metabolism; protoporphyrin-IX biosynthesis; coproporphyrinogen-III from 5-aminolevulinate: step 4/4. Its function is as follows. Catalyzes the decarboxylation of four acetate groups of uroporphyrinogen-III to yield coproporphyrinogen-III. In Xylella fastidiosa (strain Temecula1 / ATCC 700964), this protein is Uroporphyrinogen decarboxylase.